Here is a 345-residue protein sequence, read N- to C-terminus: GDSL esterase/lipase At1g23500 (345 aa).

An N-terminal signal peptide occupies residues 1–24 (MNFSLLSTMLMALSSVCLFFVGYA). Ser-42 (nucleophile) is an active-site residue. A glycan (N-linked (GlcNAc...) asparagine) is linked at Asn-103. Residues Asp-320 and His-323 contribute to the active site.

This sequence belongs to the 'GDSL' lipolytic enzyme family.

It is found in the secreted. The polypeptide is GDSL esterase/lipase At1g23500 (Arabidopsis thaliana (Mouse-ear cress)).